Here is a 190-residue protein sequence, read N- to C-terminus: GTP cyclohydrolase 1 (190 aa).

3 residues coordinate Zn(2+): C80, H83, and C151.

This sequence belongs to the GTP cyclohydrolase I family. Toroid-shaped homodecamer, composed of two pentamers of five dimers.

The enzyme catalyses GTP + H2O = 7,8-dihydroneopterin 3'-triphosphate + formate + H(+). The protein operates within cofactor biosynthesis; 7,8-dihydroneopterin triphosphate biosynthesis; 7,8-dihydroneopterin triphosphate from GTP: step 1/1. The chain is GTP cyclohydrolase 1 from Rickettsia typhi (strain ATCC VR-144 / Wilmington).